The primary structure comprises 224 residues: 7-cyano-7-deazaguanine synthase (224 aa).

7-17 serves as a coordination point for ATP; it reads LSGGLDSSTIL. C191, C199, C202, and C205 together coordinate Zn(2+).

The protein belongs to the QueC family. Requires Zn(2+) as cofactor.

The catalysed reaction is 7-carboxy-7-deazaguanine + NH4(+) + ATP = 7-cyano-7-deazaguanine + ADP + phosphate + H2O + H(+). It participates in purine metabolism; 7-cyano-7-deazaguanine biosynthesis. In terms of biological role, catalyzes the ATP-dependent conversion of 7-carboxy-7-deazaguanine (CDG) to 7-cyano-7-deazaguanine (preQ(0)). This Nostoc punctiforme (strain ATCC 29133 / PCC 73102) protein is 7-cyano-7-deazaguanine synthase.